Reading from the N-terminus, the 244-residue chain is Ribosome maturation factor RimM (244 aa).

The tract at residues 1–58 (MSERDSGSSGPVKAKAAAPRAKTSGQAPFGAFVRKPVEKTEGKAKANAANAGSGATEM) is disordered. Low complexity predominate over residues 13–22 (KAKAAAPRAK). Residues 35–44 (KPVEKTEGKA) show a composition bias toward basic and acidic residues. A compositionally biased stretch (low complexity) spans 45-57 (KANAANAGSGATE). The PRC barrel domain occupies 163–244 (ADEFYWVDLL…QITVDWEADY (82 aa)).

This sequence belongs to the RimM family. In terms of assembly, binds ribosomal protein uS19.

It localises to the cytoplasm. In terms of biological role, an accessory protein needed during the final step in the assembly of 30S ribosomal subunit, possibly for assembly of the head region. Essential for efficient processing of 16S rRNA. May be needed both before and after RbfA during the maturation of 16S rRNA. It has affinity for free ribosomal 30S subunits but not for 70S ribosomes. The protein is Ribosome maturation factor RimM of Paraburkholderia xenovorans (strain LB400).